The sequence spans 376 residues: Thymidine kinase (376 aa).

Residues Met1 to Glu39 are disordered. Residues Ser19–Arg32 show a composition bias toward basic residues. Gly56 to Thr63 contributes to the ATP binding site. Glu83 (proton acceptor) is an active-site residue. The substrate site is built by Tyr101 and Gln125. ATP is bound at residue Arg216. Arg222 contacts substrate. Residues Gly260–Pro280 are disordered.

The protein belongs to the herpesviridae thymidine kinase family. Homodimer.

The enzyme catalyses thymidine + ATP = dTMP + ADP + H(+). Functionally, catalyzes the transfer of the gamma-phospho group of ATP to thymidine to generate dTMP in the salvage pathway of pyrimidine synthesis. The dTMP serves as a substrate for DNA polymerase during viral DNA replication. Allows the virus to be reactivated and to grow in non-proliferative cells lacking a high concentration of phosphorylated nucleic acid precursors. In Human herpesvirus 1 (strain KOS) (HHV-1), this protein is Thymidine kinase.